Here is a 419-residue protein sequence, read N- to C-terminus: Tol-Pal system protein TolB (419 aa).

An N-terminal signal peptide occupies residues 1-19 (MFNRIISLFLLLFTGQVIA).

It belongs to the TolB family. As to quaternary structure, the Tol-Pal system is composed of five core proteins: the inner membrane proteins TolA, TolQ and TolR, the periplasmic protein TolB and the outer membrane protein Pal. They form a network linking the inner and outer membranes and the peptidoglycan layer.

It is found in the periplasm. In terms of biological role, part of the Tol-Pal system, which plays a role in outer membrane invagination during cell division and is important for maintaining outer membrane integrity. This Legionella pneumophila (strain Corby) protein is Tol-Pal system protein TolB.